Consider the following 348-residue polypeptide: MTAPSQVLKIRRPDDWHVHLRDGDMLKTVVPYTSEIYGRAIVMPNLASPITTVDAAIAYRQRILDAVPAGHDFTPLMTCYLTDSLDADELERGFHEGVFTAAKLYPANATTNSSHGVTSVDAIMPVLERMEKLGIPLLVHGEVTHADVDIFDREARFIDTVMEPLRQRLTALKVVFEHITTKDAAQYVRDGNDYLAATITPQHLMFNRNDMLVGGIRPHLYCLPILKRNIHQQALRELVASGFTRAFLGTDSAPHSRHRKETSCGCAGCFNAPSALGSYAAVFEEMNALAHFEAFCSLNGPQFYGLPMNTGWVELVRDEQQIPGNIALADDSLVPFLAGETVRWSVKK.

Histidine 17 and histidine 19 together coordinate Zn(2+). Residues 19–21 (HLR) and asparagine 45 contribute to the substrate site. Zn(2+) contacts are provided by lysine 103, histidine 140, and histidine 178. N6-carboxylysine is present on lysine 103. Histidine 140 contacts substrate. Leucine 223 is a binding site for substrate. Aspartate 251 is a binding site for Zn(2+). Residue aspartate 251 is part of the active site. Substrate-binding residues include histidine 255 and alanine 267.

The protein belongs to the metallo-dependent hydrolases superfamily. DHOase family. Class II DHOase subfamily. In terms of assembly, homodimer. Requires Zn(2+) as cofactor.

It carries out the reaction (S)-dihydroorotate + H2O = N-carbamoyl-L-aspartate + H(+). The protein operates within pyrimidine metabolism; UMP biosynthesis via de novo pathway; (S)-dihydroorotate from bicarbonate: step 3/3. Functionally, catalyzes the reversible cyclization of carbamoyl aspartate to dihydroorotate. The polypeptide is Dihydroorotase (Salmonella typhimurium (strain LT2 / SGSC1412 / ATCC 700720)).